The primary structure comprises 1383 residues: Negative regulator of sporulation MDS3 (1383 aa).

Kelch repeat units lie at residues 124 to 179, 199 to 246, and 356 to 402; these read CLYL…SPRF, GLFI…KDKE, and QNVV…WGGF. Polar residues predominate over residues 450–460; sequence GRSNNRTSSFV. 7 disordered regions span residues 450-506, 625-644, 653-825, 858-884, 1063-1114, 1251-1289, and 1321-1369; these read GRSN…VLDA, NQRL…DIPK, LLSS…DLFS, LDSF…SDES, NNSR…VDKE, QLKE…RLPQ, and SMTD…KSSS. Low complexity predominate over residues 631–644; the sequence is KSSNSESSSSDIPK. Residues 693 to 707 show a composition bias toward basic and acidic residues; it reads VNREEGSDCSKDRKT. Low complexity-rich tracts occupy residues 726–758, 803–815, and 858–874; these read NSTS…EQIP, ESPF…SMSG, and LDSF…VSSV. A compositionally biased stretch (basic and acidic residues) spans 1084-1094; sequence EGEKQEEIVSK. Positions 1251-1280 are enriched in low complexity; that stretch reads QLKESQLQSKSSPIIPTVSTVTPSPLPSIS. A compositionally biased stretch (polar residues) spans 1341–1352; that stretch reads LQQTMLSRTPTN.

In terms of assembly, interacts with SIT4.

It localises to the cytoplasm. Negatively regulates early sporulation-specific genes. TOR signaling pathway component that contributes to morphogenesis as a regulator of this key morphogenetic pathway. Required for growth and hyphal formation at pH 9, for full virulence in a mouse model of systemic infection and for biofilm formation. Involved in chlamydospore formation, distinctive morphological feature of the fungal pathogen C.albicans that can be induced to form in oxygen-limited environments and has been reported in clinical specimens. The chain is Negative regulator of sporulation MDS3 (MDS3) from Candida albicans (strain SC5314 / ATCC MYA-2876) (Yeast).